The sequence spans 258 residues: MFKVRVIPCLDVKDGRVVKGVNFVNLRDAGDPVEAAIAYDAAGADELCFLDITATHENRGIMLDVVRRTAEACFMPVTVGGGVRTIDDIKTLLRSGADKVSINSAAVARREFVKEAAEKFGEQCIVVAIDAKSVARPGGGSRWEIFTHGGRKSTGIDALEYAQEVVSLGAGEILLTSMDRDGTRQGFDIPLTRAVADSVPVPVIASGGVGNLDHLVDGIRQGRATAVLAASIFHFGEFTIRQAKEHMVRQGLPMRLDP.

Residues Asp11 and Asp130 contribute to the active site.

This sequence belongs to the HisA/HisF family. Heterodimer of HisH and HisF.

It localises to the cytoplasm. It carries out the reaction 5-[(5-phospho-1-deoxy-D-ribulos-1-ylimino)methylamino]-1-(5-phospho-beta-D-ribosyl)imidazole-4-carboxamide + L-glutamine = D-erythro-1-(imidazol-4-yl)glycerol 3-phosphate + 5-amino-1-(5-phospho-beta-D-ribosyl)imidazole-4-carboxamide + L-glutamate + H(+). It participates in amino-acid biosynthesis; L-histidine biosynthesis; L-histidine from 5-phospho-alpha-D-ribose 1-diphosphate: step 5/9. In terms of biological role, IGPS catalyzes the conversion of PRFAR and glutamine to IGP, AICAR and glutamate. The HisF subunit catalyzes the cyclization activity that produces IGP and AICAR from PRFAR using the ammonia provided by the HisH subunit. In Bradyrhizobium sp. (strain BTAi1 / ATCC BAA-1182), this protein is Imidazole glycerol phosphate synthase subunit HisF.